Reading from the N-terminus, the 1822-residue chain is MQDASEPVINMPALPMNSVNEQHDRHEDLPEVGTTSVTKIINDSDNEDDENGMDLGRVASESLEGDAVVSIDINTEDSSLSPAKQENEKSPEGIEQKYQEEDLKDDKKSNETIATPVPDAASRASLEKQKSGLTNLEKSTHVVLIKCIEQLIQIKVCMKNEKMKNLMEQLKPLLQTECQFDKFLIVELFQYCFESSQDEVMNISLDTISKLASFAYFSSKDKTPASFGPPKSLLQCMVDMVCDSINDEVVDGNLQLNVVKALSAFILCSEQDSMLHGAILLNSVRKLFNVFLLGDSDTIQSVAQASLTQAVTVVYERLRASHTQSNSTSALPEEDASVTENWVHDEDEPDKKITLHSMASAGTSSLDHVKVDADDPAVTSVENSSIQDAFLVFRSMCRLAVRQTSPDKVSNIRSQAMRAKLISLHLIYRILEKNSDLFMDPTLQFRGIPALKGMTLVHASRQYICLVLSRNAVSPVPQVFEVCCDIFYLMVFSLRAHFKQEIEVFFREVYFPMLDLKNTSYNQKLHTLLIIQRICLNPRALVELYINYDCDRSSTTNVFEQLLFSISKVTTNGPSETISEDIEEILPSLESSERSSTPFLNTNSASLKSEVVQLTTFSDFQLKLKTLQCVLDILQSLSNWAESGLYLSRRGVSTDEQGFVGDYDALSRSDTPVTNPYYNGKQSFEANSHSSSSIALADPSQFESNKQRKKLLRTCINKFNYKPTRGLKMLSENEYVDINDPKAIAEFLFRADGIDKTTLGDYLGEGDEKSISVMHEFIDCLSFINLKFVDALRRLLQCFRLPGEAQKIDRIMLKFSERYMKENPSAFANADTAYILAYSIILLNTDLHSPRIKNKMTKEDFIKNNRGINDGADLDEDYLGFVYDDILKNEIAMKDDQELAAIAPLMNNFSTSSGFTTFTSNGRDLQRVACIQASEEMANKATSVLKKLLYQQKHGSQKTNVYYNATHFEHIGPMLEATWMPILAALSNPLQNSDYVNELNMCLDGFQLVVRIACLFDLDLIRDAFIKTLTNFTNLHSTSEIKLRNTMVIKTLLRIASTEGNNLKDSWKDILTIISQLERVQLIGVGVDETEVPDVINARVRRKNVNIGSSNSIRHVSGSTSRSTRTRSLSKPLSPEAVSELMSTEVVLSIDRIFTQTSSLSGSAIVSFFKALCEVSWDEITSSSDLEQPRLYSLQKLVEISYYNMQRIRVEWSSIWNVLGRFFNMVGSDENRHVAVFALDSLRQLSMHFLEIEELSLFSFQKEFLKPFEYVMASDTVVEVKELVLQCVKQMIQAKISKIKSGWKTLFGVFTFAAKARSEILISMTFDTLVNLFSEHYDTLMQQNCLIDMLISFTELCKNGTNQKISLQSLEIIREVYSSLSTMIKEGLSSKPSVNETFSKYVFPVLFAYYDIIMSAEDLEVRSRALQNLFYIFLEESDDFTEETWEVVSRKFIFPIFSIFGPEADEATVMLRDEEIRTWQSTTLVEALRSLVTLLTRRFDKLHNLLKGYLWLFSNCICRDNITLSRIGTNCMQQLLSGNAYRFEVKDWNLVADMFIELFKETTPHQLLLLETFSNGQGAPVYSENENTQLSHKRGGSLPETSRSISTSSISPEKQMEFRSMIRKCILQLLLISIVAELLDNEEVFNHIPHEHVLKITVAIYDSWQFARKFNEDKSLRITLLNVGFMKQLPNLLRQETASALLYITLLFRLLKTRDPLGKTETDQKIHKLLFPVCAEMLDMYASLVVEKHTRNHAAWQPVIATILDSILNLPLELFSENIHTLYFSCCSMIAKENLDDQLRELLKNYFNRVGHILLNLNAQQE.

2 disordered regions span residues 1 to 54 (MQDA…NGMD) and 66 to 126 (DAVV…RASL). S44 carries the post-translational modification Phosphoserine. Over residues 72–84 (DINTEDSSLSPAK) the composition is skewed to polar residues. The segment covering 85–110 (QENEKSPEGIEQKYQEEDLKDDKKSN) has biased composition (basic and acidic residues). S122 and S125 each carry phosphoserine. The HUS box motif lies at 547–551 (NYDCD). T597 is modified (phosphothreonine). The residue at position 653 (S653) is a Phosphoserine. T654 bears the Phosphothreonine mark. At S669 the chain carries Phosphoserine. The region spanning 701–889 (QFESNKQRKK…GFVYDDILKN (189 aa)) is the SEC7 domain. An HDS1 domain region spans residues 898–1106 (ELAAIAPLMN…NARVRRKNVN (209 aa)). A Phosphoserine modification is found at S1110. 2 disordered regions span residues 1111 to 1131 (NSIR…SLSK) and 1584 to 1610 (ENEN…TSSI). Composition is skewed to low complexity over residues 1117–1130 (SGST…RSLS) and 1597–1610 (SLPE…TSSI). A phosphoserine mark is found at S1606 and S1609.

Its subcellular location is the cytoplasm. It is found in the golgi apparatus. It localises to the trans-Golgi network. The protein resides in the cytoplasmic vesicle. The protein localises to the COPI-coated vesicle membrane. Its subcellular location is the COPII-coated vesicle membrane. In terms of biological role, guanine exchange factor that acts as an activator of arf1 at the trans-Golgi net-work and is thus involved in vesicular budding and traffic between compartments of the Golgi apparatus. Activation of Arf (ADP-ribosylation factor) GTPases is essential for vesicle formation via recruitment of cargo adapters and coat proteins necessary for Golgi trafficking. Involved in the resistance to tamoxifen (TAM), an anticancer drug used to treat estrogen receptor (ER)-positive breast cancer. The chain is ADP-ribosylation factor guanine nucleotide-exchange factor sec72 from Schizosaccharomyces pombe (strain 972 / ATCC 24843) (Fission yeast).